Reading from the N-terminus, the 167-residue chain is Putative universal stress protein SSP1056 (167 aa).

This sequence belongs to the universal stress protein A family.

Its subcellular location is the cytoplasm. This is Putative universal stress protein SSP1056 from Staphylococcus saprophyticus subsp. saprophyticus (strain ATCC 15305 / DSM 20229 / NCIMB 8711 / NCTC 7292 / S-41).